The chain runs to 201 residues: Probable GTP-binding protein EngB (201 aa).

An EngB-type G domain is found at 25–199; the sequence is HGIEIAFIGY…KSKLNFWYEK (175 aa). GTP contacts are provided by residues 33–40, 60–64, 78–81, 145–148, and 178–180; these read GYSNSGKS, GRTQL, DLPG, TKCD, and FSS. Mg(2+)-binding residues include Ser40 and Thr62.

This sequence belongs to the TRAFAC class TrmE-Era-EngA-EngB-Septin-like GTPase superfamily. EngB GTPase family. Mg(2+) is required as a cofactor.

Functionally, necessary for normal cell division and for the maintenance of normal septation. This is Probable GTP-binding protein EngB from Buchnera aphidicola subsp. Schizaphis graminum (strain Sg).